The chain runs to 307 residues: Aspartate carbamoyltransferase catalytic subunit (307 aa).

Carbamoyl phosphate contacts are provided by arginine 56 and threonine 57. Position 84 (lysine 84) interacts with L-aspartate. Residues arginine 106, histidine 136, and glutamine 139 each contribute to the carbamoyl phosphate site. Positions 169 and 221 each coordinate L-aspartate. Residues alanine 262 and proline 263 each coordinate carbamoyl phosphate.

It belongs to the aspartate/ornithine carbamoyltransferase superfamily. ATCase family. In terms of assembly, heterododecamer (2C3:3R2) of six catalytic PyrB chains organized as two trimers (C3), and six regulatory PyrI chains organized as three dimers (R2).

It carries out the reaction carbamoyl phosphate + L-aspartate = N-carbamoyl-L-aspartate + phosphate + H(+). It functions in the pathway pyrimidine metabolism; UMP biosynthesis via de novo pathway; (S)-dihydroorotate from bicarbonate: step 2/3. In terms of biological role, catalyzes the condensation of carbamoyl phosphate and aspartate to form carbamoyl aspartate and inorganic phosphate, the committed step in the de novo pyrimidine nucleotide biosynthesis pathway. The chain is Aspartate carbamoyltransferase catalytic subunit from Streptococcus pneumoniae (strain JJA).